The following is a 106-amino-acid chain: uncharacterized protein (106 aa).

This sequence belongs to the SUI1 family.

This is an uncharacterized protein from Haemophilus influenzae (strain ATCC 51907 / DSM 11121 / KW20 / Rd).